The primary structure comprises 233 residues: Tropomyosin (233 aa).

Residues F6 to E222 adopt a coiled-coil conformation. The segment at M48 to E88 is disordered. The span at S51–L79 shows a compositional bias: basic and acidic residues.

The protein belongs to the tropomyosin family. Homodimer.

In terms of biological role, tropomyosin, in association with the troponin complex, plays a central role in the calcium dependent regulation of muscle contraction. This is Tropomyosin from Magallana gigas (Pacific oyster).